The chain runs to 539 residues: MRVNNLTPQDLKAYGINDVQDIVYNPSYDTLYQEELNPGLEGYERGVLTNLGAVAVDTGIFTGRSPKDKYIVRDDTTRDTLWWSDKGKGKNDNKPLSQETWQHLKGLVTHQLSGKRLFIVDAFCGANADTRLSVRFITEVAWQAHFVKNMFIRPTDEELVGFKPDFIVMNGAKCTNPQWKEQGLNSENFVALNLTERIQLIGGTWYGGEMKKGMFSVMNYLLPLKGIASMHCSANVGEKGDVAVFFGLSGTGKTTLSTDPKRRLIGDDEHGWDDDGVFNFEGGCYAKTIKLSKEAEPEIYHAIRRDALLENVTVREDGTVDFDDGSKTENTRVSYPIYHIDNIVKPVSKAGHATKVIFLTADAFGVLPPVSRLTANQTQYHFLSGFTAKLAGTERGVTEPTPTFSACFGAAFLTLHPTQYAEVLVKRMQAAGAQAYLVNTGWNGTGKRISIKDTRAIIDAILNGSLDNAETFRLPLFDLAIPTELPGVDTHILDPRNTYASPEQWQEKATALAKLFIENFEKYTDTPAGEALVSAGPKL.

Residues R64, Y206, and K212 each coordinate substrate. Residues K212, H231, and 247–255 (GLSGTGKTT) contribute to the ATP site. Residues K212 and H231 each contribute to the Mn(2+) site. Residue D268 coordinates Mn(2+). Residues E296, R332, 448-449 (RI), and T454 each bind ATP. R332 contacts substrate.

It belongs to the phosphoenolpyruvate carboxykinase (ATP) family. In terms of assembly, monomer. Mn(2+) serves as cofactor.

It is found in the cytoplasm. It carries out the reaction oxaloacetate + ATP = phosphoenolpyruvate + ADP + CO2. It participates in carbohydrate biosynthesis; gluconeogenesis. In terms of biological role, involved in the gluconeogenesis. Catalyzes the conversion of oxaloacetate (OAA) to phosphoenolpyruvate (PEP) through direct phosphoryl transfer between the nucleoside triphosphate and OAA. The chain is Phosphoenolpyruvate carboxykinase (ATP) from Salmonella gallinarum (strain 287/91 / NCTC 13346).